The following is a 148-amino-acid chain: 3-hydroxyacyl-[acyl-carrier-protein] dehydratase FabZ (148 aa).

H48 is a catalytic residue.

It belongs to the thioester dehydratase family. FabZ subfamily.

It localises to the cytoplasm. It carries out the reaction a (3R)-hydroxyacyl-[ACP] = a (2E)-enoyl-[ACP] + H2O. Functionally, involved in unsaturated fatty acids biosynthesis. Catalyzes the dehydration of short chain beta-hydroxyacyl-ACPs and long chain saturated and unsaturated beta-hydroxyacyl-ACPs. In Acinetobacter baylyi (strain ATCC 33305 / BD413 / ADP1), this protein is 3-hydroxyacyl-[acyl-carrier-protein] dehydratase FabZ.